Consider the following 147-residue polypeptide: Hemoglobin subunit beta-M (147 aa).

Residue valine 2 is modified to N-acetylvaline. The Globin domain occupies 3 to 147 (HLTSEEKNCI…VAHALAHKYH (145 aa)). Phosphothreonine is present on threonine 13. Serine 45 bears the Phosphoserine mark. Lysine 60 bears the N6-acetyllysine mark. Position 64 (histidine 64) interacts with heme b. Residue lysine 83 is modified to N6-acetyllysine. Heme b is bound at residue histidine 93. Position 94 is an S-nitrosocysteine (cysteine 94). The residue at position 145 (lysine 145) is an N6-acetyllysine.

Belongs to the globin family. Heterotetramer of two alpha chains and two beta chains. Red blood cells.

In terms of biological role, involved in oxygen transport from the lung to the various peripheral tissues. The polypeptide is Hemoglobin subunit beta-M (HBB) (Didelphis virginiana (North American opossum)).